Consider the following 96-residue polypeptide: Aspartyl/glutamyl-tRNA(Asn/Gln) amidotransferase subunit C (96 aa).

Belongs to the GatC family. In terms of assembly, heterotrimer of A, B and C subunits.

The catalysed reaction is L-glutamyl-tRNA(Gln) + L-glutamine + ATP + H2O = L-glutaminyl-tRNA(Gln) + L-glutamate + ADP + phosphate + H(+). It catalyses the reaction L-aspartyl-tRNA(Asn) + L-glutamine + ATP + H2O = L-asparaginyl-tRNA(Asn) + L-glutamate + ADP + phosphate + 2 H(+). Functionally, allows the formation of correctly charged Asn-tRNA(Asn) or Gln-tRNA(Gln) through the transamidation of misacylated Asp-tRNA(Asn) or Glu-tRNA(Gln) in organisms which lack either or both of asparaginyl-tRNA or glutaminyl-tRNA synthetases. The reaction takes place in the presence of glutamine and ATP through an activated phospho-Asp-tRNA(Asn) or phospho-Glu-tRNA(Gln). This is Aspartyl/glutamyl-tRNA(Asn/Gln) amidotransferase subunit C from Sulfurovum sp. (strain NBC37-1).